The following is a 204-amino-acid chain: Guanylate kinase (204 aa).

The Guanylate kinase-like domain occupies Gly-5 to Leu-184. An ATP-binding site is contributed by Gly-12–Gly-19.

The protein belongs to the guanylate kinase family.

It is found in the cytoplasm. It carries out the reaction GMP + ATP = GDP + ADP. Its function is as follows. Essential for recycling GMP and indirectly, cGMP. In Bacillus subtilis (strain 168), this protein is Guanylate kinase (gmk).